Here is a 173-residue protein sequence, read N- to C-terminus: Helix-loop-helix protein lin-22 (173 aa).

Positions Lys21–Arg34 are basic motif. Residues Lys21–Leu78 form the bHLH domain. The tract at residues Ala35–Leu78 is helix-loop-helix motif. Residues Pro83–Thr95 are compositionally biased toward low complexity. Residues Pro83–Glu102 form a disordered region.

As to expression, expressed mostly in the seam (stem) cells and hypodermis (hyp7), but also to a lesser extent in the intestine.

It is found in the nucleus. Its function is as follows. Probable transcription factor. During development, required for cell fate specification, probably by promoting or repressing expression of genes involved in specific cell fate. Involved in specifying lineages derived from the epidermal stem cells of the lateral ectoderm, known as seam cells. Modulates symmetric divisions of seam cells, perhaps in concert with the Wnt signaling pathway. May repress expression of homeobox genes mab-5, egl-5 and lin-39. The protein is Helix-loop-helix protein lin-22 of Caenorhabditis elegans.